Here is a 342-residue protein sequence, read N- to C-terminus: S-adenosyl-L-methionine-dependent tRNA 4-demethylwyosine synthase (342 aa).

[4Fe-4S] cluster is bound by residues cysteine 45, cysteine 58, cysteine 71, cysteine 81, cysteine 85, and cysteine 88. In terms of domain architecture, Radical SAM core spans 64–312 (YGIHSHRCLQ…VKHLPGYHIE (249 aa)).

This sequence belongs to the TYW1 family. Monomer. The cofactor is [4Fe-4S] cluster.

It is found in the cytoplasm. It carries out the reaction N(1)-methylguanosine(37) in tRNA(Phe) + pyruvate + S-adenosyl-L-methionine = 4-demethylwyosine(37) in tRNA(Phe) + 5'-deoxyadenosine + L-methionine + CO2 + H2O. In terms of biological role, component of the wyosine derivatives biosynthesis pathway that catalyzes the condensation of N-methylguanine with 2 carbon atoms from pyruvate to form the tricyclic 4-demethylwyosine (imG-14) on guanosine-37 of tRNA(Phe). The polypeptide is S-adenosyl-L-methionine-dependent tRNA 4-demethylwyosine synthase (Pyrococcus abyssi (strain GE5 / Orsay)).